The sequence spans 419 residues: Enolase (419 aa).

Gln161 is a binding site for (2R)-2-phosphoglycerate. Glu205 (proton donor) is an active-site residue. Asp240, Glu283, and Asp309 together coordinate Mg(2+). The (2R)-2-phosphoglycerate site is built by Lys334, Arg363, Ser364, and Lys385. Lys334 serves as the catalytic Proton acceptor.

It belongs to the enolase family. It depends on Mg(2+) as a cofactor.

It is found in the cytoplasm. Its subcellular location is the secreted. It localises to the cell surface. The enzyme catalyses (2R)-2-phosphoglycerate = phosphoenolpyruvate + H2O. The protein operates within carbohydrate degradation; glycolysis; pyruvate from D-glyceraldehyde 3-phosphate: step 4/5. Functionally, catalyzes the reversible conversion of 2-phosphoglycerate (2-PG) into phosphoenolpyruvate (PEP). It is essential for the degradation of carbohydrates via glycolysis. In Saccharolobus islandicus (strain Y.N.15.51 / Yellowstone #2) (Sulfolobus islandicus), this protein is Enolase.